We begin with the raw amino-acid sequence, 137 residues long: Global transcriptional regulator Spx (137 aa).

An intrachain disulfide couples cysteine 10 to cysteine 13.

Belongs to the ArsC family. Spx subfamily. In terms of assembly, interacts with the C-terminal domain of the alpha subunit of the RNAP.

It is found in the cytoplasm. Global transcriptional regulator that plays a key role in stress response and exerts either positive or negative regulation of genes. Acts by interacting with the C-terminal domain of the alpha subunit of the RNA polymerase (RNAP). This interaction can enhance binding of RNAP to the promoter region of target genes and stimulate their transcription, or block interaction of RNAP with activator. The polypeptide is Global transcriptional regulator Spx (Streptococcus mutans serotype c (strain ATCC 700610 / UA159)).